The chain runs to 611 residues: Autophagy-related protein 22-2 (611 aa).

The segment at 1–24 (MRADDNPSARSLHAQFPGDDTRPT) is disordered. Residues 35-55 (YGWAAEVFTVCAMGSFLPITL) traverse the membrane as a helical segment. N78 carries N-linked (GlcNAc...) asparagine glycosylation. A run of 3 helical transmembrane segments spans residues 116–136 (TASF…VLII), 151–171 (LLVA…SVVP), and 175–195 (IVGA…FVLL). N221 carries N-linked (GlcNAc...) asparagine glycosylation. 2 consecutive transmembrane segments (helical) span residues 286–306 (IGIG…VIIA) and 316–336 (LVLF…ALWL). The N-linked (GlcNAc...) asparagine glycan is linked to N353. 6 helical membrane passes run 380-400 (ILLF…VSGT), 414-434 (AALG…AFSW), 449-469 (IIAC…GFVP), 483-503 (WEMF…SSYC), 521-541 (ALYA…VGLI), and 551-571 (AFVF…LVDV).

This sequence belongs to the ATG22 family.

Its subcellular location is the vacuole membrane. In terms of biological role, vacuolar effluxer which mediate the efflux of amino acids resulting from autophagic degradation. The release of autophagic amino acids allows the maintenance of protein synthesis and viability during nitrogen starvation. The sequence is that of Autophagy-related protein 22-2 (atg22-2) from Aspergillus clavatus (strain ATCC 1007 / CBS 513.65 / DSM 816 / NCTC 3887 / NRRL 1 / QM 1276 / 107).